Consider the following 320-residue polypeptide: Serpentine receptor class gamma-15 (320 aa).

Helical transmembrane passes span 29–49, 57–77, 85–105, 151–171, 197–217, 240–260, and 268–288; these read TISY…TILV, GSSF…IVFI, FLYV…SSLI, VSLV…IISP, LFQS…TSVT, IYIS…AFCT, and LFTA…VILF.

This sequence belongs to the nematode receptor-like protein srg family.

The protein localises to the membrane. This is Serpentine receptor class gamma-15 (srg-15) from Caenorhabditis elegans.